The sequence spans 457 residues: Amidophosphoribosyltransferase (457 aa).

The active-site Nucleophile is Cys2. The 222-residue stretch at 2 to 223 folds into the Glutamine amidotransferase type-2 domain; sequence CGVVGIYHPD…PGKAAIIKDG (222 aa). Cys239 contributes to the [4Fe-4S] cluster binding site. Positions 286, 348, and 349 each coordinate Mg(2+). The [4Fe-4S] cluster site is built by Cys385, Cys438, and Cys441.

The protein in the C-terminal section; belongs to the purine/pyrimidine phosphoribosyltransferase family. It depends on Mg(2+) as a cofactor. [4Fe-4S] cluster serves as cofactor.

It carries out the reaction 5-phospho-beta-D-ribosylamine + L-glutamate + diphosphate = 5-phospho-alpha-D-ribose 1-diphosphate + L-glutamine + H2O. The protein operates within purine metabolism; IMP biosynthesis via de novo pathway; N(1)-(5-phospho-D-ribosyl)glycinamide from 5-phospho-alpha-D-ribose 1-diphosphate: step 1/2. Catalyzes the formation of phosphoribosylamine from phosphoribosylpyrophosphate (PRPP) and glutamine. The chain is Amidophosphoribosyltransferase from Archaeoglobus fulgidus (strain ATCC 49558 / DSM 4304 / JCM 9628 / NBRC 100126 / VC-16).